The following is a 66-amino-acid chain: UPF0391 membrane protein AM1_5042 (66 aa).

2 consecutive transmembrane segments (helical) span residues 4 to 24 and 28 to 47; these read LTLTFLVVALIAAFLGFSGIA and AAIAKILFCIFIVCFILVWP.

The protein belongs to the UPF0391 family.

It localises to the cell membrane. The polypeptide is UPF0391 membrane protein AM1_5042 (Acaryochloris marina (strain MBIC 11017)).